We begin with the raw amino-acid sequence, 1000 residues long: Kinesin-like protein CIN8 (1000 aa).

The span at 1–26 (MPAENQNTGQDRSSNSISKNGNSQVG) shows a compositional bias: polar residues. The interval 1-28 (MPAENQNTGQDRSSNSISKNGNSQVGCH) is disordered. One can recognise a Kinesin motor domain in the interval 36–477 (NITVAVRCRG…LEYASKAKNI (442 aa)). 128–135 (GMTSTGKT) serves as a coordination point for ATP. Residues 220–242 (ANNTTSNSASSSRSNSRNSSPRS) are compositionally biased toward low complexity. 2 disordered regions span residues 220 to 248 (ANNT…DLTP) and 260 to 312 (KSLP…PNDQ). The segment covering 261–276 (SLPNTIKQQYQQQQAV) has biased composition (polar residues). Positions 277–301 (NSRNNSSSNSGSTTNNASSNTNTNN) are enriched in low complexity. A compositionally biased stretch (polar residues) spans 302-312 (GQRSSMAPNDQ). 2 coiled-coil regions span residues 518–615 (MSQD…MALH) and 860–904 (ISVM…IKNS). The disordered stretch occupies residues 970 to 1000 (VISPKKHAIEDENKSSENVDNEGSRKMLKIE). Serine 972 carries the post-translational modification Phosphoserine. Residues 976-1000 (HAIEDENKSSENVDNEGSRKMLKIE) show a composition bias toward basic and acidic residues.

This sequence belongs to the TRAFAC class myosin-kinesin ATPase superfamily. Kinesin family. BimC subfamily.

The protein localises to the cytoplasm. The protein resides in the cytoskeleton. It localises to the spindle. Its subcellular location is the mitochondrion. Its function is as follows. Elongates the mitotic spindle by interacting with spindle microtubules to generate an outward force pushing spindle poles apart. Following spindle assembly, CIN8 and KIP1 apparently act to oppose a force, possibly generated by KAR3, that draws separated poles back together. The polypeptide is Kinesin-like protein CIN8 (CIN8) (Saccharomyces cerevisiae (strain ATCC 204508 / S288c) (Baker's yeast)).